A 118-amino-acid chain; its full sequence is Basic phospholipase A2 CM-III (118 aa).

7 disulfides stabilise this stretch: C11–C70, C26–C117, C28–C44, C43–C98, C50–C91, C59–C84, and C77–C89. Residues Y27, G29, and G31 each contribute to the Ca(2+) site. H47 is an active-site residue. Ca(2+) is bound at residue D48. The Coagulation factor Xa binding motif signature appears at 52–69 (EKAGKMGCWPYFTLYKYK). D92 is a catalytic residue.

Belongs to the phospholipase A2 family. Group I subfamily. D49 sub-subfamily. The cofactor is Ca(2+). Expressed by the venom gland.

The protein localises to the secreted. The enzyme catalyses a 1,2-diacyl-sn-glycero-3-phosphocholine + H2O = a 1-acyl-sn-glycero-3-phosphocholine + a fatty acid + H(+). Functionally, snake venom phospholipase A2 (PLA2) that shows several activities. It shows strong anticoagulant activity, probably by binding to coagulation factor Xa (F10) and inhibiting the formation of the prothrombinase complex, shows direct hemolytic action, causes neuromuscular blockade with a gradual contracture and a decreased sensitivity to ACh and KCl, abolishes twitches evoked by indirect stimulation earlier than those by direct stimulation (in the mouse phrenic nerve-diaphragm preparation), and causes myonecrosis when injected intramuscularly. PLA2 catalyzes the calcium-dependent hydrolysis of the 2-acyl groups in 3-sn-phosphoglycerides. The polypeptide is Basic phospholipase A2 CM-III (Naja mossambica (Mozambique spitting cobra)).